Consider the following 855-residue polypeptide: E3 ubiquitin-protein ligase TRIM71 (855 aa).

At Ala2 the chain carries N-acetylalanine. Residues Cys12–Asp94 form an RING-type zinc finger. Low complexity predominate over residues Ser26–Ser42. Disordered regions lie at residues Ser26–Pro48 and Ala126–Ser177. Residues Arg135–Gly145 show a composition bias toward gly residues. Residues Ser147–Ala157 are compositionally biased toward basic residues. A B box-type 1; atypical zinc finger spans residues Arg181–Gly228. A B box-type 2 zinc finger spans residues Glu260–Leu301. The Zn(2+) site is built by Cys265, His268, Cys288, and His293. Positions Gln378–Ala414 form a coiled coil. The Filamin repeat unit spans residues Ser466–Val567. NHL repeat units lie at residues Val580–Cys623, His627–Glu670, Leu674–Asp717, Leu721–Asp764, Ala768–Asn811, and Leu815–Phe855.

The protein belongs to the TRIM/RBCC family. Interacts (via NHL repeats) with AGO2; the interaction increases in presence of RNA. Interacts with HSP90AA1. Interacts (via NHL repeats) with MOV10, PABPC1, PUM1, PUM2, STAU2, XRN1 and XRN2 in an RNA-dependent manner. Interacts with SHCBP1; leading to enhance its stability. Autoubiquitinated.

The protein resides in the cytoplasm. Its subcellular location is the P-body. The enzyme catalyses S-ubiquitinyl-[E2 ubiquitin-conjugating enzyme]-L-cysteine + [acceptor protein]-L-lysine = [E2 ubiquitin-conjugating enzyme]-L-cysteine + N(6)-ubiquitinyl-[acceptor protein]-L-lysine.. It functions in the pathway protein modification; protein ubiquitination. In terms of biological role, E3 ubiquitin-protein ligase that cooperates with the microRNAs (miRNAs) machinery and promotes embryonic stem cells proliferation and maintenance. Binds to miRNAs and associates with AGO2, participating in post-transcriptional repression of transcripts such as CDKN1A. In addition, participates in post-transcriptional mRNA repression in a miRNA independent mechanism. Facilitates the G1-S transition to promote rapid embryonic stem cell self-renewal by repressing CDKN1A expression. Required to maintain proliferation and prevent premature differentiation of neural progenitor cells during early neural development: positively regulates FGF signaling by controlling the stability of SHCBP1. Specific regulator of miRNA biogenesis. Binds to miRNA MIR29A hairpin and postranscriptionally modulates MIR29A levels, which indirectly regulates TET proteins expression. The polypeptide is E3 ubiquitin-protein ligase TRIM71 (Trim71) (Rattus norvegicus (Rat)).